Reading from the N-terminus, the 843-residue chain is Probable cleavage and polyadenylation specificity factor subunit 2 (843 aa).

The span at alanine 414–arginine 425 shows a compositional bias: basic and acidic residues. Disordered regions lie at residues alanine 414–alanine 443 and aspartate 691–lysine 753. Residues glutamate 432–isoleucine 441 are compositionally biased toward acidic residues. The segment covering serine 732–threonine 746 has biased composition (basic and acidic residues).

The protein belongs to the metallo-beta-lactamase superfamily. RNA-metabolizing metallo-beta-lactamase-like family. CPSF2/YSH1 subfamily. CPSF is a heterotetramer composed of four distinct subunits 160, 100, 70 and 30 kDa.

The protein localises to the nucleus. Its function is as follows. CPSF plays a key role in pre-mRNA 3'-end formation, recognizing the AAUAAA signal sequence and interacting with poly(A)polymerase and other factors to bring about cleavage and poly(A) addition. This chain is Probable cleavage and polyadenylation specificity factor subunit 2 (cpsf-2), found in Caenorhabditis elegans.